The sequence spans 419 residues: 3-isopropylmalate dehydratase large subunit (419 aa).

3 residues coordinate [4Fe-4S] cluster: cysteine 300, cysteine 360, and cysteine 363.

The protein belongs to the aconitase/IPM isomerase family. LeuC type 2 subfamily. In terms of assembly, heterodimer of LeuC and LeuD. Requires [4Fe-4S] cluster as cofactor.

The enzyme catalyses (2R,3S)-3-isopropylmalate = (2S)-2-isopropylmalate. It functions in the pathway amino-acid biosynthesis; L-leucine biosynthesis; L-leucine from 3-methyl-2-oxobutanoate: step 2/4. Its function is as follows. Catalyzes the isomerization between 2-isopropylmalate and 3-isopropylmalate, via the formation of 2-isopropylmaleate. In Desulfatibacillum aliphaticivorans, this protein is 3-isopropylmalate dehydratase large subunit.